Reading from the N-terminus, the 569-residue chain is Arylsulfatase I (569 aa).

Residues methionine 1–alanine 23 form the signal peptide. Residues aspartate 55, aspartate 56, and cysteine 93 each coordinate Ca(2+). The active-site Nucleophile is cysteine 93. The residue at position 93 (cysteine 93) is a 3-oxoalanine (Cys). Residue lysine 147 coordinates substrate. Histidine 149 is an active-site residue. Residue histidine 239 coordinates substrate. N-linked (GlcNAc...) asparagine glycosylation is found at asparagine 276 and asparagine 288. The Ca(2+) site is built by aspartate 297 and asparagine 298. Lysine 315 serves as a coordination point for substrate. N-linked (GlcNAc...) asparagine glycans are attached at residues asparagine 466 and asparagine 496. Positions arginine 510–phenylalanine 539 are disordered.

It belongs to the sulfatase family. It depends on Ca(2+) as a cofactor. Post-translationally, the oxidation of Cys-93 residue to 3-oxoalanine (also known as C(alpha)-formylglycine) by SUMF1/Sulfatase-modifying factor 1, seems critical for catalytic activity. As to expression, expressed in placenta, in embryonic stem cells, fetal eyes and lens.

It localises to the secreted. The protein localises to the endoplasmic reticulum. Functionally, displays arylsulfatase activity at neutral pH, when co-expressed with SUMF1; arylsulfatase activity is measured in the secretion medium of retinal cell line, but no activity is recorded when measured in cell extracts. Lacks arylsulfatase activity. This chain is Arylsulfatase I (ARSI), found in Homo sapiens (Human).